We begin with the raw amino-acid sequence, 379 residues long: EP300-interacting inhibitor of differentiation 3 (379 aa).

Residues 32–58 (LKQVEEEEEVEALKVEVAAASDTESDT) are a coiled coil.

Belongs to the NSE4 family. In terms of assembly, component of the SMC5-SMC6 complex which consists at least of SMC5, SMC6, NSMCE2, NSMCE1, NSMCE4A or EID3 and NSMCE3. NSMCE1, NSMCE4A or EID3 and NSMCE3 probably form a subcomplex that bridges the head domains of the SMC5:SMC6 heterodimer. Homodimer, and heterodimer with EID2. Interacts with the C-terminal region of CREBBP.

It is found in the nucleus. Its subcellular location is the cytoplasm. The protein localises to the chromosome. It localises to the telomere. Functionally, tissue-specific component of the SMC5-SMC6 complex, a complex involved in repair of DNA double-strand breaks by homologous recombination. The complex may promote sister chromatid homologous recombination by recruiting the SMC1-SMC3 cohesin complex to double-strand breaks. The complex is required for telomere maintenance via recombination and mediates sumoylation of shelterin complex (telosome) components. Acts as a repressor of nuclear receptor-dependent transcription possibly by interfering with CREBBP-dependent coactivation. May function as a coinhibitor of other CREBBP/EP300-dependent transcription factors. The chain is EP300-interacting inhibitor of differentiation 3 from Bos taurus (Bovine).